The primary structure comprises 211 residues: MIVLALDVYEREKALSIAEDVKDYISMIKVNWPLIIGSGLGVISELKKKTGLPIIADLKLADIPNTNRLIAKKVYDAGADYIILHSFVGRDSVKAVKELGEIIMIVEMSHPGALEFINPLTDKFIDMANEIKPFGVIAPGTRPERIRYIRERLSKDIKVLTPGIGAQGGSPVEALKAGADYIIIGRAIYNAERPREAAKKIFEEVKEWSSR.

Residues Asp7, Lys29, Asp57–Thr66, Ser109, Pro162–Val172, Gly185, and Arg186 contribute to the substrate site. Lys59 functions as the Proton donor in the catalytic mechanism.

It belongs to the OMP decarboxylase family. Type 1 subfamily. In terms of assembly, homodimer.

It carries out the reaction orotidine 5'-phosphate + H(+) = UMP + CO2. It functions in the pathway pyrimidine metabolism; UMP biosynthesis via de novo pathway; UMP from orotate: step 2/2. Catalyzes the decarboxylation of orotidine 5'-monophosphate (OMP) to uridine 5'-monophosphate (UMP). This is Orotidine 5'-phosphate decarboxylase from Pyrococcus furiosus (strain ATCC 43587 / DSM 3638 / JCM 8422 / Vc1).